The sequence spans 745 residues: Polyribonucleotide nucleotidyltransferase (745 aa).

The Mg(2+) site is built by aspartate 487 and aspartate 493. Positions 554 to 613 (PRIETMQIPTDKIRDVIGTGGKIIREIVEKTGAKINIEDTGIVKIASSDGKAIKAAYNWI) constitute a KH domain. The region spanning 623-691 (GTIYDGTIVK…ERGKIRLSMK (69 aa)) is the S1 motif domain. Positions 695–745 (QETGEDLTEKLKAERAERGEPEREERSDRGDRGDRGPRRDRGERRRESSGE) are disordered. Residues 701 to 745 (LTEKLKAERAERGEPEREERSDRGDRGDRGPRRDRGERRRESSGE) show a composition bias toward basic and acidic residues.

The protein belongs to the polyribonucleotide nucleotidyltransferase family. Mg(2+) is required as a cofactor.

It localises to the cytoplasm. The catalysed reaction is RNA(n+1) + phosphate = RNA(n) + a ribonucleoside 5'-diphosphate. Involved in mRNA degradation. Catalyzes the phosphorolysis of single-stranded polyribonucleotides processively in the 3'- to 5'-direction. This Methylorubrum extorquens (strain CM4 / NCIMB 13688) (Methylobacterium extorquens) protein is Polyribonucleotide nucleotidyltransferase.